We begin with the raw amino-acid sequence, 156 residues long: Small ribosomal subunit protein uS7 (156 aa).

This sequence belongs to the universal ribosomal protein uS7 family. As to quaternary structure, part of the 30S ribosomal subunit. Contacts proteins S9 and S11.

One of the primary rRNA binding proteins, it binds directly to 16S rRNA where it nucleates assembly of the head domain of the 30S subunit. Is located at the subunit interface close to the decoding center, probably blocks exit of the E-site tRNA. The sequence is that of Small ribosomal subunit protein uS7 from Mannheimia succiniciproducens (strain KCTC 0769BP / MBEL55E).